Reading from the N-terminus, the 167-residue chain is MQLILLSSLLLLGLSLANGHETDPEGQILNSLVETVSRLEKKIDKVENAFLTVHRARSFGSGSERLYVTNKQVGNFEAVRNTCVQAGGRIPSPQLLNENKAFASVLERHNKAAYLVVQNSAKFTNWAAGEPNNADGNKLCVKADAQGAWHSASCDEDLLVVCEFSFI.

An N-terminal signal peptide occupies residues 1 to 19 (MQLILLSSLLLLGLSLANG). In terms of domain architecture, C-type lectin spans 62–163 (GSERLYVTNK…CDEDLLVVCE (102 aa)). 2 disulfides stabilise this stretch: Cys-83–Cys-162 and Cys-140–Cys-154.

This sequence belongs to the alpha-type phospholipase A2 inhibitor family. As to quaternary structure, homotrimer.

The protein localises to the secreted. Functionally, has no PLA2 inhibitory activity. The sequence is that of Phospholipase A2 inhibitor alpha-like protein from Elaphe climacophora (Japanese rat snake).